Reading from the N-terminus, the 422-residue chain is Histidine--tRNA ligase (422 aa).

This sequence belongs to the class-II aminoacyl-tRNA synthetase family. Homodimer.

The protein resides in the cytoplasm. The enzyme catalyses tRNA(His) + L-histidine + ATP = L-histidyl-tRNA(His) + AMP + diphosphate + H(+). This is Histidine--tRNA ligase from Vibrio atlanticus (strain LGP32) (Vibrio splendidus (strain Mel32)).